Consider the following 400-residue polypeptide: Formate-dependent phosphoribosylglycinamide formyltransferase (400 aa).

N(1)-(5-phospho-beta-D-ribosyl)glycinamide contacts are provided by residues 22–23 (EL) and Glu82. ATP-binding positions include Arg115, Lys156, 161–166 (SSGKGQ), 196–199 (EGFI), and Glu204. Residues 120–309 (RLAAETLGLP…EFALHARAIL (190 aa)) enclose the ATP-grasp domain. Positions 268 and 280 each coordinate Mg(2+). N(1)-(5-phospho-beta-D-ribosyl)glycinamide contacts are provided by residues Asp287, Lys361, and 368–369 (RR).

The protein belongs to the PurK/PurT family. Homodimer.

The enzyme catalyses N(1)-(5-phospho-beta-D-ribosyl)glycinamide + formate + ATP = N(2)-formyl-N(1)-(5-phospho-beta-D-ribosyl)glycinamide + ADP + phosphate + H(+). It participates in purine metabolism; IMP biosynthesis via de novo pathway; N(2)-formyl-N(1)-(5-phospho-D-ribosyl)glycinamide from N(1)-(5-phospho-D-ribosyl)glycinamide (formate route): step 1/1. Involved in the de novo purine biosynthesis. Catalyzes the transfer of formate to 5-phospho-ribosyl-glycinamide (GAR), producing 5-phospho-ribosyl-N-formylglycinamide (FGAR). Formate is provided by PurU via hydrolysis of 10-formyl-tetrahydrofolate. This Xanthomonas oryzae pv. oryzae (strain KACC10331 / KXO85) protein is Formate-dependent phosphoribosylglycinamide formyltransferase.